The following is a 74-amino-acid chain: MKIKGLMILASSLLILAFIHQSESASMRSLLMNNGSYEEEEQVLKYDSMGTIANSSALDSKRVIPTGPNPLHNR.

Residues 1–24 form the signal peptide; sequence MKIKGLMILASSLLILAFIHQSES. Asn34 and Asn54 each carry an N-linked (GlcNAc...) asparagine glycan. 2 positions are modified to hydroxyproline: Pro65 and Pro68. Pro68 is a glycosylation site (O-linked (Ara...) hydroxyproline).

It belongs to the CLV3/ESR signal peptide family. In terms of processing, the O-glycosylation (arabinosylation) of the hydroxyproline Pro-68 enhances binding affinity of the CLE19p peptide for its receptor. In terms of tissue distribution, mostly expressed in heart-shape embryos, pollen and young flower buds, and, to a lower extent, in inflorescence, leaves and roots.

The protein localises to the secreted. It localises to the extracellular space. Extracellular signal peptide that regulates cell fate. Represses root apical meristem maintenance. The chain is CLAVATA3/ESR (CLE)-related protein 19 from Arabidopsis thaliana (Mouse-ear cress).